The chain runs to 702 residues: Elongation factor G (702 aa).

Positions 8 to 290 (ARYRNIGISA…AVIEYLPAPT (283 aa)) constitute a tr-type G domain. GTP is bound by residues 17-24 (AHIDAGKT), 88-92 (DTPGH), and 142-145 (NKMD).

This sequence belongs to the TRAFAC class translation factor GTPase superfamily. Classic translation factor GTPase family. EF-G/EF-2 subfamily.

Its subcellular location is the cytoplasm. In terms of biological role, catalyzes the GTP-dependent ribosomal translocation step during translation elongation. During this step, the ribosome changes from the pre-translocational (PRE) to the post-translocational (POST) state as the newly formed A-site-bound peptidyl-tRNA and P-site-bound deacylated tRNA move to the P and E sites, respectively. Catalyzes the coordinated movement of the two tRNA molecules, the mRNA and conformational changes in the ribosome. The sequence is that of Elongation factor G from Photorhabdus laumondii subsp. laumondii (strain DSM 15139 / CIP 105565 / TT01) (Photorhabdus luminescens subsp. laumondii).